A 368-amino-acid chain; its full sequence is Methionine import ATP-binding protein MetN (368 aa).

Residues 5–260 (IELNNLSVQF…PKEALTKQFI (256 aa)) enclose the ABC transporter domain. Residue 41–48 (GYSGAGKS) coordinates ATP.

This sequence belongs to the ABC transporter superfamily. Methionine importer (TC 3.A.1.24) family. The complex is composed of two ATP-binding proteins (MetN), two transmembrane proteins (MetI) and a solute-binding protein (MetQ).

The protein resides in the cell membrane. The enzyme catalyses L-methionine(out) + ATP + H2O = L-methionine(in) + ADP + phosphate + H(+). It carries out the reaction D-methionine(out) + ATP + H2O = D-methionine(in) + ADP + phosphate + H(+). Functionally, part of the ABC transporter complex MetNIQ involved in methionine import. Responsible for energy coupling to the transport system. In Lactococcus lactis subsp. cremoris (strain MG1363), this protein is Methionine import ATP-binding protein MetN.